Reading from the N-terminus, the 173-residue chain is Inorganic pyrophosphatase (173 aa).

Substrate is bound by residues K28, R42, and Y54. Mg(2+) is bound by residues D64, D69, and D101. Y140 is a binding site for substrate.

The protein belongs to the PPase family. In terms of assembly, homohexamer. The cofactor is Mg(2+).

It is found in the cytoplasm. It carries out the reaction diphosphate + H2O = 2 phosphate + H(+). Functionally, catalyzes the hydrolysis of inorganic pyrophosphate (PPi) forming two phosphate ions. The polypeptide is Inorganic pyrophosphatase (Helicobacter pylori (strain J99 / ATCC 700824) (Campylobacter pylori J99)).